We begin with the raw amino-acid sequence, 830 residues long: Leucine--tRNA ligase (830 aa).

The 'HIGH' region signature appears at 48-58 (PYPSGAIHMGH). Positions 596 to 600 (KMSKS) match the 'KMSKS' region motif. Lys-599 is an ATP binding site.

Belongs to the class-I aminoacyl-tRNA synthetase family.

It localises to the cytoplasm. The catalysed reaction is tRNA(Leu) + L-leucine + ATP = L-leucyl-tRNA(Leu) + AMP + diphosphate. The chain is Leucine--tRNA ligase from Helicobacter hepaticus (strain ATCC 51449 / 3B1).